A 583-amino-acid chain; its full sequence is NEDD4-binding protein 2-like 2 (583 aa).

Residues 162–197 adopt a coiled-coil conformation; it reads NSEKSEIDNELFQFYKEIEELEKEKDGFENSCKESE. The disordered stretch occupies residues 549 to 575; sequence EPSHKSTQRPPPPQGRQRWGGSLGSHN.

The sequence is that of NEDD4-binding protein 2-like 2 (N4BP2L2) from Homo sapiens (Human).